A 380-amino-acid chain; its full sequence is Chaperone protein DnaJ (380 aa).

The J domain occupies 5–70; it reads DFYEVLGVSR…QKRAAYDQYG (66 aa). The CR-type zinc finger occupies 135-213; that stretch reads GCEKDIEIPT…CHGDGRVQKT (79 aa). Positions 148, 151, 165, 168, 187, 190, 201, and 204 each coordinate Zn(2+). 4 CXXCXGXG motif repeats span residues 148–155, 165–172, 187–194, and 201–208; these read CEPCDGTG, CSTCHGQG, CPTCHGKG, and CNSCHGDG.

The protein belongs to the DnaJ family. As to quaternary structure, homodimer. The cofactor is Zn(2+).

Its subcellular location is the cytoplasm. Participates actively in the response to hyperosmotic and heat shock by preventing the aggregation of stress-denatured proteins and by disaggregating proteins, also in an autonomous, DnaK-independent fashion. Unfolded proteins bind initially to DnaJ; upon interaction with the DnaJ-bound protein, DnaK hydrolyzes its bound ATP, resulting in the formation of a stable complex. GrpE releases ADP from DnaK; ATP binding to DnaK triggers the release of the substrate protein, thus completing the reaction cycle. Several rounds of ATP-dependent interactions between DnaJ, DnaK and GrpE are required for fully efficient folding. Also involved, together with DnaK and GrpE, in the DNA replication of plasmids through activation of initiation proteins. The chain is Chaperone protein DnaJ from Aliivibrio salmonicida (strain LFI1238) (Vibrio salmonicida (strain LFI1238)).